An 824-amino-acid chain; its full sequence is Leucine--tRNA ligase (824 aa).

A 'HIGH' region motif is present at residues 40–50 (PYPSGKIHMGH). The 'KMSKS' region motif lies at 580–584 (KMSKS). Residue Lys583 participates in ATP binding.

The protein belongs to the class-I aminoacyl-tRNA synthetase family.

Its subcellular location is the cytoplasm. The enzyme catalyses tRNA(Leu) + L-leucine + ATP = L-leucyl-tRNA(Leu) + AMP + diphosphate. The polypeptide is Leucine--tRNA ligase (Alkaliphilus metalliredigens (strain QYMF)).